We begin with the raw amino-acid sequence, 182 residues long: MILLHAIYTLWVIILLPLLNAEKFVPKVTEAPIETSFNLVSFDDSNTSIRLDGWGVVWISFDAGENWETVKEIEERIFRFTVDPFHGQERGFAFICESPKFYITDDRGESWRALTIPSSEEYLDGDCFITTHPRNKELLIANCYSYMIDADVLYDPSEIYLSNDGNPFLKLNLPWKRKKTTI.

BNR repeat units follow at residues 58 to 69 (WISFDAGENWET) and 102 to 113 (YITDDRGESWRA).

This is an uncharacterized protein from Saccharomyces cerevisiae (strain ATCC 204508 / S288c) (Baker's yeast).